The primary structure comprises 405 residues: ATP phosphoribosyltransferase regulatory subunit (405 aa).

This sequence belongs to the class-II aminoacyl-tRNA synthetase family. HisZ subfamily. In terms of assembly, heteromultimer composed of HisG and HisZ subunits.

It is found in the cytoplasm. It functions in the pathway amino-acid biosynthesis; L-histidine biosynthesis; L-histidine from 5-phospho-alpha-D-ribose 1-diphosphate: step 1/9. In terms of biological role, required for the first step of histidine biosynthesis. May allow the feedback regulation of ATP phosphoribosyltransferase activity by histidine. This chain is ATP phosphoribosyltransferase regulatory subunit, found in Oceanobacillus iheyensis (strain DSM 14371 / CIP 107618 / JCM 11309 / KCTC 3954 / HTE831).